The chain runs to 113 residues: UPF0342 protein MGAS2096_Spy0691 (113 aa).

This sequence belongs to the UPF0342 family.

The polypeptide is UPF0342 protein MGAS2096_Spy0691 (Streptococcus pyogenes serotype M12 (strain MGAS2096)).